The primary structure comprises 92 residues: MSRTVFCQYQQCDTEGLDFAPYPGELGQRIFAQIGKAGWQAWLAHQTMLINENRLSPRDPKHRAFLEAELQKFLFERNADKPEGYVDPLGEE.

This sequence belongs to the Fe(2+)-trafficking protein family.

Its function is as follows. Could be a mediator in iron transactions between iron acquisition and iron-requiring processes, such as synthesis and/or repair of Fe-S clusters in biosynthetic enzymes. In Xanthomonas campestris pv. campestris (strain 8004), this protein is Probable Fe(2+)-trafficking protein.